Consider the following 344-residue polypeptide: GLIPR1-like protein 2 (344 aa).

The SCP domain maps to 58–192 (VNLHNELRGD…IHAAIFICNY (135 aa)). A helical transmembrane segment spans residues 254–274 (TFILLLRILCFILCVITVLIV). Composition is skewed to acidic residues over residues 292–304 (EESEAGNEEEEKE) and 312–334 (EMEMEIMEMEEEKEEREEEEEET). Residues 292 to 344 (EESEAGNEEEEKEEEKKEKEEMEMEIMEMEEEKEEREEEEEETQKEKMEEEEK) form a disordered region. The span at 335–344 (QKEKMEEEEK) shows a compositional bias: basic and acidic residues.

It belongs to the CRISP family. Highly expressed in testis. Detected in prostate, kidney, bladder, lung and bone marrow.

The protein resides in the membrane. The polypeptide is GLIPR1-like protein 2 (GLIPR1L2) (Homo sapiens (Human)).